We begin with the raw amino-acid sequence, 118 residues long: Integration host factor subunit alpha (118 aa).

A disordered region spans residues 97 to 118 (NGAMPMSTEESDENTAQSASGG).

Belongs to the bacterial histone-like protein family. In terms of assembly, heterodimer of an alpha and a beta chain.

Functionally, this protein is one of the two subunits of integration host factor, a specific DNA-binding protein that functions in genetic recombination as well as in transcriptional and translational control. This chain is Integration host factor subunit alpha, found in Rhodopseudomonas palustris (strain ATCC BAA-98 / CGA009).